We begin with the raw amino-acid sequence, 311 residues long: Oligopeptide transport system permease protein OppC (311 aa).

Residues 1–48 (MTDYRTQPINQKNADFVEQVADRIEEMQLEGRSLWQDAKRRFFRNKAA) are Cytoplasmic-facing. The helical transmembrane segment at 49 to 69 (VASLIILAFIIIFITVAPWFF) threads the bilayer. The Periplasmic portion of the chain corresponds to 70-113 (PFTYEDTDWNMMSAAPTMEGYHFFGTDASGRDLLVRTAIGGRIS). The region spanning 110–299 (GRISLLVGIA…LTLFCFNFIG (190 aa)) is the ABC transmembrane type-1 domain. The chain crosses the membrane as a helical span at residues 114–134 (LLVGIAGAFISVTIGTIYGAI). Topologically, residues 135 to 146 (SGYVGGKTDMLM) are cytoplasmic. A helical transmembrane segment spans residues 147 to 169 (MRFLEILSSFPFMFFVILLVTLF). Topologically, residues 170–172 (GQN) are periplasmic. Residues 173–192 (IFLIFIAIGAIAWLGLARIV) form a helical membrane-spanning segment. Topologically, residues 193–222 (RGQTLSLKNKEFVEAAIVCGVPRRQIILKH) are cytoplasmic. The helical transmembrane segment at 223–243 (IIPNVLGLVAVYASLEVPGLI) threads the bilayer. Over 244-278 (LFESFLSFLGLGTQEPMSSWGALLSDGAAQMEVSP) the chain is Periplasmic. The helical transmembrane segment at 279-299 (WLLIFPAFFLCLTLFCFNFIG) threads the bilayer. Over 300 to 311 (DGLRDALDPKDR) the chain is Cytoplasmic.

Belongs to the binding-protein-dependent transport system permease family. OppBC subfamily. As to quaternary structure, the complex is composed of two ATP-binding proteins (OppD and OppF), two transmembrane proteins (OppB and OppC) and a solute-binding protein (OppA).

The protein resides in the cell inner membrane. In terms of biological role, part of the ABC transporter complex OppABCDF involved in the uptake of oligopeptides. Probably responsible for the translocation of the substrate across the membrane. The protein is Oligopeptide transport system permease protein OppC (oppC) of Haemophilus influenzae (strain ATCC 51907 / DSM 11121 / KW20 / Rd).